The chain runs to 549 residues: MAKELRYNTDARARLEHGVNALADAVKVTLGPKGRNAVLEKLTGPPTITNDGVTIAREIQLREPFANMGAQLVKEVAMKTNGVVGDGTTTATVLAQAMVREGLRSVDAGANPMRVRRGIERAVSVVVDSLHEQASQIGGQSDLQRIATLAASDDEVIGHAISKAVDYVGKSGVVTTEESDTLGLSVDIVDGIEFDHGYISGYMVTDPERMEAVHTNPLILLTNKKITQVQDIMPSIEVAKRADRPLVVLAEEVDGPALQLLVGGNMHKTMQSVVVRAPGFGHRRVAELEDLAVALGGHVIAKDTGIELSEISVEHLGSCDRITVTENETTIVGGHGDQRLLDARIAQLESQHERAKIEADQESLELRIARLTGRVAVIRVGGATSVELKERMLRVEDALAATRAAVEAGIVSGGGTALAQSHRALADLDLTGDEAIGCDVVRRALAEPLRWIAINAGFDGDEVVEVVAGLPLGHGFNALTGEYGDMFDDGVIDPFKVTRAALESAASIAALLITTETAVVEEVLGNPGAIMAPGFGDLAEGMVRPSNIY.

It belongs to the chaperonin (HSP60) family.

In terms of biological role, probably plays an essential role in the productive folding of PrmA, and thus in the formation of the active PrmABCD complex. The sequence is that of Probable chaperonin-like protein PrmG (prmG) from Rhodococcus jostii (strain RHA1).